A 506-amino-acid polypeptide reads, in one-letter code: MITLTPGHLTLPQLRQIAREPVQLTLDPASFAKIDAGAKAVSDIAAKGEPAYGINTGFGRLASTHIPHDQLELLQKNLVLSHAVGVGEPMARSSVRLLIALKLSSLGRGHSGIRREVMDALIKLFNADVLPLIPVKGSVGASGDLAPLAHMSAVLLGVGEVFIRGERASAVDGLRVAGLAPLTLQAKEGLALLNGTQASTALALDNLFAIEDLYRTALVAGALSVDAAAGSVKPFDARIHELRGHRGQIDAAAAYRELLEGSAINLSHRDCGKVQDPYSLRCQPQVMGACLDQMRHAADVLLVEANAVSDNPLIFPDTGEVLSGGNFHAEPVAFAADNLALAAAEIGALAERRIALLIDATLSGLPPFLVKDGGVNSGFMIAHVTAAALASENKTLAHPASVDSLPTSANQEDHVSMATFAARKLADIADNTKHILAIELLAAAQGVDLRENETSPKLAEVMKTIRSKVAHYELDHYFAPDIAVIAKLVVERAFAKHCPFAFASEQ.

Residues 141-143 (ASG) constitute a cross-link (5-imidazolinone (Ala-Gly)). At S142 the chain carries 2,3-didehydroalanine (Ser).

Belongs to the PAL/histidase family. Contains an active site 4-methylidene-imidazol-5-one (MIO), which is formed autocatalytically by cyclization and dehydration of residues Ala-Ser-Gly.

It localises to the cytoplasm. The enzyme catalyses L-histidine = trans-urocanate + NH4(+). Its pathway is amino-acid degradation; L-histidine degradation into L-glutamate; N-formimidoyl-L-glutamate from L-histidine: step 1/3. This Burkholderia multivorans (strain ATCC 17616 / 249) protein is Histidine ammonia-lyase.